The sequence spans 70 residues: Toxin Boma6d (70 aa).

The LCN-type CS-alpha/beta domain maps to 2 to 68; the sequence is RDAYIAQNYN…VPIKVEGKCH (67 aa). 4 disulfide bridges follow: Cys12-Cys67, Cys16-Cys40, Cys22-Cys50, and Cys26-Cys52.

This sequence belongs to the long (4 C-C) scorpion toxin superfamily. Sodium channel inhibitor family. Alpha subfamily. In terms of tissue distribution, expressed by the venom gland.

The protein resides in the secreted. Its function is as follows. Alpha toxins bind voltage-independently at site-3 of sodium channels (Nav) and inhibit the inactivation of the activated channels, thereby blocking neuronal transmission. This chain is Toxin Boma6d, found in Buthus occitanus mardochei (Moroccan scorpion).